The primary structure comprises 1026 residues: Exportin-T (1026 aa).

This sequence belongs to the exportin family.

The protein resides in the nucleus. Its subcellular location is the cytoplasm. Its function is as follows. tRNA nucleus export receptor which facilitates tRNA translocation across the nuclear pore complex. Involved in pre-tRNA splicing, probably by affecting the interaction of pre-tRNA with splicing endonuclease. This Aspergillus oryzae (strain ATCC 42149 / RIB 40) (Yellow koji mold) protein is Exportin-T (los1).